A 598-amino-acid polypeptide reads, in one-letter code: MAPLSLTDIVSALPSEEDAWGPPVPTGNHLDGVPYAPFSKGDKLGRMADWGADSKDSRERGRQAYNRNYRDQQVYGAGTSSLFAVQVAEDESSFSVVDNTRTSVKTRGFGRGGGTIFRGRGQRGGAQRGRGGAFQRPAGGRGGQAGGDRYYDQRGGRGNRGRRFGWKDYDKPQRNRDSSVAIRPEWSMLEEIDFSRLSKLNLETPDGEDLDNYGFLYYYDRSYDKAPVKNTERRLRALERAAYNVTTSADPVIQELAEKDEATVFATADILSMLMCASRSVYSWDIVIVKHGNKIYFDKRDNASIDLVTVNENAADAPMEASEGQAKHDSINTPGALALEATIINHNFALQTVVESDSAKVEFSHPNPFYNPSEETEPLASKGFKYRRFDLSLEKDEEPVQIIVRTEIDAVLKNNISGEDQHVTLKALNEFDHKAQGAGGALDWRSKLYSQRGAVVATEMKNNNVKLARWTTQAILAKSDVMKLGFVTRANPRSATAHMILGVIGYKPREFALQMNLNMANGWGIVRTIIDLVNSLDARDEEEGDDAQEDKIKKYILVKDPNKSVVRLYSVPANTFEEEDDTGAKAEKDEESEEKDEE.

Positions 104-178 (VKTRGFGRGG…YDKPQRNRDS (75 aa)) are disordered. Positions 109–132 (FGRGGGTIFRGRGQRGGAQRGRGG) are enriched in gly residues. Positions 165 to 177 (GWKDYDKPQRNRD) are enriched in basic and acidic residues. The tract at residues 304-318 (SIDLVTVNENAADAP) is RNA gate. A disordered region spans residues 574–598 (NTFEEEDDTGAKAEKDEESEEKDEE). Residues 589–598 (DEESEEKDEE) are compositionally biased toward acidic residues.

It belongs to the eIF-3 subunit D family. In terms of assembly, component of the eukaryotic translation initiation factor 3 (eIF-3) complex.

Its subcellular location is the cytoplasm. MRNA cap-binding component of the eukaryotic translation initiation factor 3 (eIF-3) complex, which is involved in protein synthesis of a specialized repertoire of mRNAs and, together with other initiation factors, stimulates binding of mRNA and methionyl-tRNAi to the 40S ribosome. The eIF-3 complex specifically targets and initiates translation of a subset of mRNAs involved in cell proliferation. In the eIF-3 complex, eif3d specifically recognizes and binds the 7-methylguanosine cap of a subset of mRNAs. The polypeptide is Eukaryotic translation initiation factor 3 subunit D (Coccidioides immitis (strain RS) (Valley fever fungus)).